Here is a 305-residue protein sequence, read N- to C-terminus: Elongation factor Ts (305 aa).

An involved in Mg(2+) ion dislocation from EF-Tu region spans residues 79–82 (TDFV).

This sequence belongs to the EF-Ts family.

The protein resides in the cytoplasm. Associates with the EF-Tu.GDP complex and induces the exchange of GDP to GTP. It remains bound to the aminoacyl-tRNA.EF-Tu.GTP complex up to the GTP hydrolysis stage on the ribosome. This is Elongation factor Ts from Brucella suis biovar 1 (strain 1330).